A 1413-amino-acid polypeptide reads, in one-letter code: Sushi, nidogen and EGF-like domain-containing protein 1 (1413 aa).

An N-terminal signal peptide occupies residues 1-24 (MRHGVAWALLVAAALGLGARGVRG). An NIDO domain is found at 103–258 (AFWADVDNRR…GRWAFRIDDA (156 aa)). 2 N-linked (GlcNAc...) asparagine glycosylation sites follow: Asn-145 and Asn-204. EGF-like domains are found at residues 268-309 (TTSV…RRCH), 311-347 (DVNE…PTCE), and 349-385 (AQSP…AACE). Intrachain disulfides connect Cys-272–Cys-284, Cys-278–Cys-297, Cys-299–Cys-308, Cys-315–Cys-326, Cys-320–Cys-335, Cys-337–Cys-346, Cys-353–Cys-364, Cys-358–Cys-373, Cys-375–Cys-384, Cys-391–Cys-402, Cys-396–Cys-411, Cys-413–Cys-422, Cys-433–Cys-444, Cys-438–Cys-453, Cys-455–Cys-464, Cys-472–Cys-480, Cys-474–Cys-488, and Cys-490–Cys-499. The N-linked (GlcNAc...) asparagine glycan is linked to Asn-292. The region spanning 352–374 (PCDTKECQHGGQCQVENGSAVCV) is the Follistatin-like 1 domain. An N-linked (GlcNAc...) asparagine glycan is attached at Asn-368. The EGF-like 4; calcium-binding domain occupies 387 to 423 (DVDDCSPDPCLNGGSCVDLVGNYTCLCAEPFKGLRCE). Asn-408 carries N-linked (GlcNAc...) asparagine glycosylation. EGF-like domains follow at residues 429-465 (VPDA…LDCR) and 468-500 (VPDD…LLCE). An N-linked (GlcNAc...) asparagine glycan is attached at Asn-484. A Follistatin-like 2 domain is found at 507-530 (PCNMNTQCPDGGYCMEHGGSYLCV). Residue Asn-536 is glycosylated (N-linked (GlcNAc...) asparagine). EGF-like domains follow at residues 541-577 (LPSP…KHCE), 580-616 (RPHL…RHCE), 619-655 (KPDS…RHCE), and 657-693 (APSP…RRCQ). Cystine bridges form between Cys-545–Cys-556, Cys-550–Cys-565, Cys-567–Cys-576, Cys-584–Cys-595, Cys-589–Cys-604, Cys-606–Cys-615, Cys-623–Cys-634, Cys-628–Cys-643, Cys-645–Cys-654, Cys-661–Cys-672, Cys-666–Cys-681, Cys-683–Cys-692, Cys-698–Cys-739, Cys-724–Cys-751, Cys-757–Cys-768, Cys-762–Cys-777, Cys-779–Cys-788, Cys-795–Cys-806, Cys-800–Cys-815, Cys-817–Cys-826, Cys-833–Cys-844, Cys-838–Cys-853, Cys-855–Cys-864, Cys-871–Cys-882, Cys-876–Cys-891, and Cys-893–Cys-902. Residues 696 to 753 (VDCGPPEEVKHATLRFNGTRLGAVALYACDRGYSLSAPSRIRVCQPHGVWSEPPQCLE) enclose the Sushi domain. Asn-712 is a glycosylation site (N-linked (GlcNAc...) asparagine). The region spanning 753 to 789 (EIDECRSQPCLHGGSCQDRVAGYLCLCSTGYEGAHCE) is the EGF-like 11; calcium-binding domain. The 37-residue stretch at 791–827 (ERDECRAHPCRNGGSCRNLPGAYVCRCPAGFVGVHCE) folds into the EGF-like 12; calcium-binding domain. 2 EGF-like domains span residues 829-865 (EVDA…YHCE) and 867-903 (VSDP…EDCA). Residue Asn-886 is glycosylated (N-linked (GlcNAc...) asparagine). 3 consecutive Fibronectin type-III domains span residues 908–1006 (PPTA…TRPR), 1007–1105 (PVEG…TRPL), and 1106–1200 (PPAN…SPRD). 4 N-linked (GlcNAc...) asparagine glycosylation sites follow: Asn-977, Asn-1015, Asn-1109, and Asn-1139. The tract at residues 1206–1226 (WHQGGHHPRVLKNRPPPARLP) is disordered. Basic residues predominate over residues 1207 to 1217 (HQGGHHPRVLK). Residues 1307 to 1343 (VPGNCSENPCQNGGTCVPGADAHSCDCGPGFKGRRCE) form the EGF-like 15 domain. N-linked (GlcNAc...) asparagine glycosylation is present at Asn-1310. Disulfide bonds link Cys-1311/Cys-1322, Cys-1316/Cys-1331, and Cys-1333/Cys-1342. Positions 1394–1413 (TSLKKTPNRKQSKSQTLEKS) are disordered.

Phosphorylated on serine and threonine residues. In terms of processing, N-glycosylated.

The protein resides in the secreted. Its subcellular location is the extracellular space. The protein localises to the extracellular matrix. The sequence is that of Sushi, nidogen and EGF-like domain-containing protein 1 from Homo sapiens (Human).